A 258-amino-acid polypeptide reads, in one-letter code: Phosphate import ATP-binding protein PstB (258 aa).

The region spanning Leu-5–Lys-247 is the ABC transporter domain. Gly-37 to Ser-44 provides a ligand contact to ATP.

The protein belongs to the ABC transporter superfamily. Phosphate importer (TC 3.A.1.7) family. The complex is composed of two ATP-binding proteins (PstB), two transmembrane proteins (PstC and PstA) and a solute-binding protein (PstS).

It is found in the cell membrane. It catalyses the reaction phosphate(out) + ATP + H2O = ADP + 2 phosphate(in) + H(+). In terms of biological role, part of the ABC transporter complex PstSACB involved in phosphate import. Responsible for energy coupling to the transport system. The chain is Phosphate import ATP-binding protein PstB from Rhodococcus jostii (strain RHA1).